The chain runs to 247 residues: Mast cell protease 2 (247 aa).

The N-terminal stretch at 1–18 is a signal peptide; it reads MQALLFLMALLLPSGAGA. A propeptide spans 19 to 20 (activation peptide); sequence EE. The region spanning 21–244 is the Peptidase S1 domain; sequence IIGGVESIPH…YVPWINAVIN (224 aa). Cysteine 50 and cysteine 66 form a disulfide bridge. Catalysis depends on charge relay system residues histidine 65 and aspartate 109. 2 disulfide bridges follow: cysteine 143–cysteine 208 and cysteine 174–cysteine 187. Catalysis depends on serine 202, which acts as the Charge relay system.

The protein belongs to the peptidase S1 family. Granzyme subfamily.

Functionally, this enzyme, isolated from small intestine, specifically inactivates the apo forms of a certain group of intracellular pyridoxal phosphate-requiring enzymes. It has chymotrypsin-like specificity towards small substrates. This Rattus norvegicus (Rat) protein is Mast cell protease 2 (Mcpt2).